The primary structure comprises 360 residues: 45 kDa calcium-binding protein (360 aa).

Residues 1-29 form the signal peptide; the sequence is MVSKQAFLFSLGSLYLSLLFVFLLMDVYA. N33 carries N-linked (GlcNAc...) asparagine glycosylation. EF-hand domains lie at 96-131, 135-170, 231-266, 276-311, and 312-347; these read RNRRKLAAIFAKVDRNEDKQISANEMQRWIMEKTEE, EAVNENKLHFRAVDPDGDGHVSWDEYKIKFLASKGF, MLKFMVKEIIRDLDQDGDKKLTLSEFISLPVGTVEN, WVRDRKKEYEEVIDANHDGIVTMEELEEYMDPMNEY, and NALNEAKQMIAVADENQDHHLSLEEILKYSEYFTGS. Residues D109, N111, D113, Q115, E120, D148, D150, D152, H154, E159, D244, D246, D248, K250, E255, D289, N291, D293, E300, D325, N327, D329, H331, and E336 each coordinate Ca(2+).

This sequence belongs to the CREC family.

Its subcellular location is the golgi apparatus lumen. Its function is as follows. May regulate calcium-dependent activities in the endoplasmic reticulum lumen or post-ER compartment. This chain is 45 kDa calcium-binding protein (sdf4), found in Xenopus tropicalis (Western clawed frog).